Consider the following 399-residue polypeptide: GDP-D-glucose phosphorylase 1 (399 aa).

H237 (tele-GMP-histidine intermediate) is an active-site residue.

The protein belongs to the GDPGP1 family.

The protein localises to the cytoplasm. The catalysed reaction is GDP-alpha-D-glucose + phosphate = alpha-D-glucose 1-phosphate + GDP + H(+). Its function is as follows. Specific and highly efficient GDP-D-glucose phosphorylase regulating the levels of GDP-D-glucose in cells. The polypeptide is GDP-D-glucose phosphorylase 1 (gdpgp1) (Xenopus laevis (African clawed frog)).